Consider the following 702-residue polypeptide: Sodium/hydrogen exchanger 6 (702 aa).

Transmembrane regions (helical) follow at residues 72–92 (SANLLIFILLLTLTILTIWLF), 104–124 (GLAMIYGLLVGLVLRYGIHVP), 177–197 (VTFDPEVFFNILLPPIIFYAG), 212–232 (ILAYAFLGTAISCFVIGSIMY), 253–273 (CLLFGAIVSATDPVTVLAIFH), 279–299 (VELYALLFGESVLNDAVAIVL), 325–345 (IGIFLGIFSGSFAMGAATGVV), 373–393 (TFLLAEAWGFTGVVAVLFCGI), 415–435 (FELLNFLAENFIFSYMGLTLF), 437–457 (FQNHVFNPTFVVGAFIAIFLG), 480–500 (NFQHMMMFAGLRGAMAFALAI), and 516–536 (LLIVFFTVWVFGGGTTAMLSC).

This sequence belongs to the monovalent cation:proton antiporter 1 (CPA1) transporter (TC 2.A.36) family. Homodimer. Interacts with RACK1; regulates the distribution of SLC9A6 between endosomes and the plasma membrane. In terms of processing, ubiquitinated (in vitro). Glycosylated.

The protein localises to the endosome membrane. The protein resides in the recycling endosome membrane. It is found in the early endosome membrane. It localises to the late endosome membrane. Its subcellular location is the cell membrane. The catalysed reaction is Na(+)(in) + H(+)(out) = Na(+)(out) + H(+)(in). The enzyme catalyses K(+)(in) + H(+)(out) = K(+)(out) + H(+)(in). Endosomal Na(+), K(+)/H(+) antiporter. Mediates the electroneutral exchange of endosomal luminal H(+) for a cytosolic Na(+) or K(+). By facilitating proton efflux, SLC9A6 counteracts the acidity generated by vacuolar (V)-ATPase, thereby limiting luminal acidification. Responsible for alkalizing and maintaining the endosomal pH, and consequently in, e.g., endosome maturation and trafficking of recycling endosomal cargo. Plays a critical role during neurodevelopment by regulating synaptic development and plasticity. Implicated in the maintenance of cell polarity in a manner that is dependent on its ability to modulate intravesicular pH. Regulates intracelular pH in some specialized cells, osteoclasts and stereocilia where this transporter localizes to the plasma membrane. This is Sodium/hydrogen exchanger 6 (Slc9a6) from Mus musculus (Mouse).